The sequence spans 261 residues: uncharacterized protein (261 aa).

The first 22 residues, 1–22, serve as a signal peptide directing secretion; it reads MRYLKKVTIYISLLILTIFIGG. A lipid anchor (N-palmitoyl cysteine) is attached at C23. Residue C23 is the site of S-diacylglycerol cysteine attachment.

It belongs to the staphylococcal tandem lipoprotein family.

It localises to the cell membrane. This is an uncharacterized protein from Staphylococcus epidermidis (strain ATCC 35984 / DSM 28319 / BCRC 17069 / CCUG 31568 / BM 3577 / RP62A).